A 161-amino-acid chain; its full sequence is Cyclic pyranopterin monophosphate synthase (161 aa).

Residues 75 to 77 (MCH) and 115 to 116 (ME) each bind substrate. D130 is an active-site residue.

The protein belongs to the MoaC family. As to quaternary structure, homohexamer; trimer of dimers.

The catalysed reaction is (8S)-3',8-cyclo-7,8-dihydroguanosine 5'-triphosphate = cyclic pyranopterin phosphate + diphosphate. It functions in the pathway cofactor biosynthesis; molybdopterin biosynthesis. Catalyzes the conversion of (8S)-3',8-cyclo-7,8-dihydroguanosine 5'-triphosphate to cyclic pyranopterin monophosphate (cPMP). This is Cyclic pyranopterin monophosphate synthase from Bacillus cereus (strain 03BB102).